A 187-amino-acid chain; its full sequence is Elongation factor P (187 aa).

Belongs to the elongation factor P family.

The protein resides in the cytoplasm. The protein operates within protein biosynthesis; polypeptide chain elongation. Involved in peptide bond synthesis. Stimulates efficient translation and peptide-bond synthesis on native or reconstituted 70S ribosomes in vitro. Probably functions indirectly by altering the affinity of the ribosome for aminoacyl-tRNA, thus increasing their reactivity as acceptors for peptidyl transferase. This chain is Elongation factor P, found in Rhodococcus jostii (strain RHA1).